A 666-amino-acid polypeptide reads, in one-letter code: E3 ubiquitin-protein ligase MBR2 (666 aa).

Polar residues-rich tracts occupy residues 1 to 14 (MQGP…STGI), 23 to 35 (CSTN…NNIL), 42 to 58 (FPNN…ASSS), and 73 to 88 (SSSR…SNGS). 6 disordered regions span residues 1–58 (MQGP…ASSS), 73–95 (SSSR…RQLL), 155–179 (SLGS…GLGS), 221–329 (SSLS…DGQP), 400–433 (NPST…TPHN), and 457–491 (GASL…RQRR). The segment covering 221–239 (SSLSLSMPSQNSPNVNNQS) has biased composition (low complexity). 3 stretches are compositionally biased toward polar residues: residues 258–268 (AFPSTRSTETI), 286–303 (FSFT…QLPA), and 414–433 (GSSS…TPHN). The RING-type; atypical zinc-finger motif lies at 619–660 (CCVCQEEYAEGDDLGTLGCGHEFHTACVKQWLMLKNLCPICK).

This sequence belongs to the RING-type zinc finger family. As to quaternary structure, interacts with MED25 and UBC11.

It carries out the reaction S-ubiquitinyl-[E2 ubiquitin-conjugating enzyme]-L-cysteine + [acceptor protein]-L-lysine = [E2 ubiquitin-conjugating enzyme]-L-cysteine + N(6)-ubiquitinyl-[acceptor protein]-L-lysine.. It participates in protein modification; protein ubiquitination. Its function is as follows. E3 ubiquitin-protein ligase that functions as a regulator of MED25 stability by targeting MED25 for degradation in a RING-H2-dependent way. Proteasome-dependent degradation of MED25 seems to activate its function as positive regulator of FLOWERING LOCUS T (FT) and is important to induce the expression of FT and consequently to promote flowering. May function downstream of HAL3 and be required for HAL3-regulated plant growth. Activation of MBR2 by HAL3 may lead to the degradation of cell cycle suppressors, resulting in enhancement of cell division and plant growth. In Arabidopsis thaliana (Mouse-ear cress), this protein is E3 ubiquitin-protein ligase MBR2 (MBR2).